The chain runs to 451 residues: Epi-neemfruitin B 7-O-acetyltransferse L7AT (451 aa).

Residues His-165 and Asp-384 each act as proton acceptor in the active site.

This sequence belongs to the plant acyltransferase family. In terms of assembly, monomer. As to expression, mainly expressed in petioles and, to a lower extent, in roots.

The catalysed reaction is epi-neemfruitin B + acetyl-CoA = 7-acetyl-epi-neemfruitin B + CoA. Its pathway is secondary metabolite biosynthesis; terpenoid biosynthesis. In terms of biological role, acetyltransferase involved in the biosynthesis of limonoids triterpene natural products such as azadirachtin, an antifeedant widely used as bioinsecticide, and possessing many medicinal applications including anti-tumoral, anti-malarial, anti-rheumatic, antibacterial, anti-inflammatory, anti-pyretic and diuretic effects. Catalyzes the formation of 7-acetyl-epi-neemfruitin B from epi-neemfruitin B. In Melia azedarach (Chinaberry tree), this protein is Epi-neemfruitin B 7-O-acetyltransferse L7AT.